A 147-amino-acid polypeptide reads, in one-letter code: Large ribosomal subunit protein bL9 (147 aa).

The protein belongs to the bacterial ribosomal protein bL9 family.

In terms of biological role, binds to the 23S rRNA. The chain is Large ribosomal subunit protein bL9 from Campylobacter jejuni subsp. jejuni serotype O:6 (strain 81116 / NCTC 11828).